Reading from the N-terminus, the 423-residue chain is Imidazolonepropionase (423 aa).

Residues histidine 78 and histidine 80 each contribute to the Fe(3+) site. 2 residues coordinate Zn(2+): histidine 78 and histidine 80. Positions 87, 150, and 183 each coordinate 4-imidazolone-5-propanoate. Tyrosine 150 lines the N-formimidoyl-L-glutamate pocket. Histidine 247 contacts Fe(3+). Histidine 247 is a Zn(2+) binding site. 4-imidazolone-5-propanoate is bound at residue glutamate 250. Fe(3+) is bound at residue aspartate 322. Aspartate 322 is a binding site for Zn(2+). N-formimidoyl-L-glutamate contacts are provided by asparagine 324 and glycine 326. Serine 327 contacts 4-imidazolone-5-propanoate.

The protein belongs to the metallo-dependent hydrolases superfamily. HutI family. Zn(2+) serves as cofactor. Requires Fe(3+) as cofactor.

The protein localises to the cytoplasm. The catalysed reaction is 4-imidazolone-5-propanoate + H2O = N-formimidoyl-L-glutamate. The protein operates within amino-acid degradation; L-histidine degradation into L-glutamate; N-formimidoyl-L-glutamate from L-histidine: step 3/3. Catalyzes the hydrolytic cleavage of the carbon-nitrogen bond in imidazolone-5-propanoate to yield N-formimidoyl-L-glutamate. It is the third step in the universal histidine degradation pathway. In Bacillus anthracis (strain A0248), this protein is Imidazolonepropionase.